Consider the following 201-residue polypeptide: Potassium-transporting ATPase KdpC subunit (201 aa).

The chain crosses the membrane as a helical span at residues 17 to 37; the sequence is LLTGLAYPLAMTGLAGILFPV.

It belongs to the KdpC family. The system is composed of three essential subunits: KdpA, KdpB and KdpC.

It is found in the cell inner membrane. Part of the high-affinity ATP-driven potassium transport (or Kdp) system, which catalyzes the hydrolysis of ATP coupled with the electrogenic transport of potassium into the cytoplasm. This subunit acts as a catalytic chaperone that increases the ATP-binding affinity of the ATP-hydrolyzing subunit KdpB by the formation of a transient KdpB/KdpC/ATP ternary complex. The polypeptide is Potassium-transporting ATPase KdpC subunit (Methylobacterium nodulans (strain LMG 21967 / CNCM I-2342 / ORS 2060)).